The following is an 82-amino-acid chain: Small ribosomal subunit protein bS16 (82 aa).

Belongs to the bacterial ribosomal protein bS16 family.

This is Small ribosomal subunit protein bS16 from Natranaerobius thermophilus (strain ATCC BAA-1301 / DSM 18059 / JW/NM-WN-LF).